Reading from the N-terminus, the 214-residue chain is MATRSPSVVISDDEPGYDLDLFCIPNHYVEDLEKVFIPHGLIMDRTERLARDVMKEMGGHHIVALCVLKGGYKFFADLLDYIKALNRNSDRSIPMTVDFIRLKSYCNDQSTGDIKVIGGDDLSTLTGKNVLIVEDIIDTGKTMQTLLSLVKQYSPKMVKVASLLVKRTSRSVGYRPDFVGFEIPDKFVVGYALDYNEYFRDLNHVCVISETGKA.

The residue at position 2 (Ala-2) is an N-acetylalanine. Residue Lys-69 coordinates GMP. At Lys-103 the chain carries N6-acetyllysine. Lys-115 participates in a covalent cross-link: Glycyl lysine isopeptide (Lys-Gly) (interchain with G-Cter in SUMO1); alternate. A Glycyl lysine isopeptide (Lys-Gly) (interchain with G-Cter in SUMO2); alternate cross-link involves residue Lys-115. Residues 134–142, Lys-166, 186–188, and Asp-194 contribute to the GMP site; these read EDIIDTGKT and KFV. Asp-138 (proton acceptor) is an active-site residue. Thr-142 carries the phosphothreonine modification. A Mg(2+)-binding site is contributed by Asp-194.

This sequence belongs to the purine/pyrimidine phosphoribosyltransferase family. Homotetramer. The cofactor is Mg(2+).

It localises to the cytoplasm. The catalysed reaction is IMP + diphosphate = hypoxanthine + 5-phospho-alpha-D-ribose 1-diphosphate. It catalyses the reaction GMP + diphosphate = guanine + 5-phospho-alpha-D-ribose 1-diphosphate. It participates in purine metabolism; IMP biosynthesis via salvage pathway; IMP from hypoxanthine: step 1/1. Converts guanine to guanosine monophosphate, and hypoxanthine to inosine monophosphate. Transfers the 5-phosphoribosyl group from 5-phosphoribosylpyrophosphate onto the purine. Plays a central role in the generation of purine nucleotides through the purine salvage pathway. In Mus spretus (Western Mediterranean mouse), this protein is Hypoxanthine-guanine phosphoribosyltransferase (Hprt1).